Here is a 369-residue protein sequence, read N- to C-terminus: Flagellar P-ring protein (369 aa).

Positions 1 to 23 are cleaved as a signal peptide; it reads MRIASFFTVLLTLLTLNIAPASA.

This sequence belongs to the FlgI family. The basal body constitutes a major portion of the flagellar organelle and consists of four rings (L,P,S, and M) mounted on a central rod.

It localises to the periplasm. The protein localises to the bacterial flagellum basal body. Functionally, assembles around the rod to form the L-ring and probably protects the motor/basal body from shearing forces during rotation. This Pectobacterium carotovorum subsp. carotovorum (strain PC1) protein is Flagellar P-ring protein.